The following is a 505-amino-acid chain: Glucose-6-phosphate 1-dehydrogenase (505 aa).

Serine 2 carries the N-acetylserine modification. Residues 18–25 (GASGDLAK) and arginine 52 each bind NADP(+). The residue at position 142 (serine 142) is a Phosphoserine. At tyrosine 145 the chain carries Phosphotyrosine. NADP(+) is bound at residue lysine 157. Residues lysine 157, 187–191 (HYLGK), glutamate 225, and aspartate 244 contribute to the D-glucose 6-phosphate site. Residue histidine 249 is the Proton acceptor of the active site. Arginine 340 serves as a coordination point for NADP(+). Lysine 343 is a binding site for D-glucose 6-phosphate. Residues lysine 349, arginine 353, and arginine 375 each contribute to the NADP(+) site. Residue glutamine 377 coordinates D-glucose 6-phosphate. NADP(+) is bound by residues 383-385 (YLK) and arginine 470.

The protein belongs to the glucose-6-phosphate dehydrogenase family.

It carries out the reaction D-glucose 6-phosphate + NADP(+) = 6-phospho-D-glucono-1,5-lactone + NADPH + H(+). It participates in carbohydrate degradation; pentose phosphate pathway; D-ribulose 5-phosphate from D-glucose 6-phosphate (oxidative stage): step 1/3. In terms of biological role, catalyzes the rate-limiting step of the oxidative pentose-phosphate pathway, which represents a route for the dissimilation of carbohydrates besides glycolysis. The main function of this enzyme is to provide reducing power (NADPH) and pentose phosphates for fatty acid and nucleic acid synthesis. In Saccharomyces cerevisiae (strain ATCC 204508 / S288c) (Baker's yeast), this protein is Glucose-6-phosphate 1-dehydrogenase (ZWF1).